Consider the following 150-residue polypeptide: Flagellar assembly factor FliW (150 aa).

The protein belongs to the FliW family. Interacts with translational regulator CsrA and flagellin(s).

The protein localises to the cytoplasm. Acts as an anti-CsrA protein, binds CsrA and prevents it from repressing translation of its target genes, one of which is flagellin. Binds to flagellin and participates in the assembly of the flagellum. The sequence is that of Flagellar assembly factor FliW from Leptospira borgpetersenii serovar Hardjo-bovis (strain L550).